A 259-amino-acid polypeptide reads, in one-letter code: Small ribosomal subunit protein uS2 (259 aa).

It belongs to the universal ribosomal protein uS2 family.

This Streptococcus pneumoniae (strain Hungary19A-6) protein is Small ribosomal subunit protein uS2.